The chain runs to 228 residues: 7-cyano-7-deazaguanine synthase (228 aa).

Residue 8-18 (LSGGLDSTTCL) participates in ATP binding. Cys188, Cys198, Cys201, and Cys204 together coordinate Zn(2+).

The protein belongs to the QueC family. Zn(2+) is required as a cofactor.

It carries out the reaction 7-carboxy-7-deazaguanine + NH4(+) + ATP = 7-cyano-7-deazaguanine + ADP + phosphate + H2O + H(+). It functions in the pathway purine metabolism; 7-cyano-7-deazaguanine biosynthesis. Functionally, catalyzes the ATP-dependent conversion of 7-carboxy-7-deazaguanine (CDG) to 7-cyano-7-deazaguanine (preQ(0)). This chain is 7-cyano-7-deazaguanine synthase, found in Legionella pneumophila (strain Corby).